Reading from the N-terminus, the 460-residue chain is Argininosuccinate lyase (460 aa).

The protein belongs to the lyase 1 family. Argininosuccinate lyase subfamily.

The protein resides in the cytoplasm. It carries out the reaction 2-(N(omega)-L-arginino)succinate = fumarate + L-arginine. It participates in amino-acid biosynthesis; L-arginine biosynthesis; L-arginine from L-ornithine and carbamoyl phosphate: step 3/3. The protein is Argininosuccinate lyase of Mannheimia succiniciproducens (strain KCTC 0769BP / MBEL55E).